A 512-amino-acid polypeptide reads, in one-letter code: Sorting nexin MVP1 (512 aa).

Residues 1–24 (MDLEADPWRVNSEENGNNISGSVW) are disordered. The span at 13–22 (EENGNNISGS) shows a compositional bias: low complexity. Residues 130-248 (AEDIVSVEEI…LTFLTVPTDL (119 aa)) enclose the PX domain. A 1,2-diacyl-sn-glycero-3-phospho-(1D-myo-inositol-3-phosphate) is bound by residues arginine 174, serine 176, lysine 200, and arginine 215.

This sequence belongs to the sorting nexin family.

It localises to the cytoplasm. The protein resides in the membrane. Its function is as follows. Required for vacuolar protein sorting. The chain is Sorting nexin MVP1 (MVP1) from Kluyveromyces lactis (strain ATCC 8585 / CBS 2359 / DSM 70799 / NBRC 1267 / NRRL Y-1140 / WM37) (Yeast).